The sequence spans 313 residues: tRNA dimethylallyltransferase (313 aa).

9 to 16 (GPTASGKT) contacts ATP. Substrate is bound at residue 11–16 (TASGKT). Positions 34–37 (DSMQ) are interaction with substrate tRNA.

The protein belongs to the IPP transferase family. As to quaternary structure, monomer. Mg(2+) is required as a cofactor.

The enzyme catalyses adenosine(37) in tRNA + dimethylallyl diphosphate = N(6)-dimethylallyladenosine(37) in tRNA + diphosphate. In terms of biological role, catalyzes the transfer of a dimethylallyl group onto the adenine at position 37 in tRNAs that read codons beginning with uridine, leading to the formation of N6-(dimethylallyl)adenosine (i(6)A). This is tRNA dimethylallyltransferase from Acetivibrio thermocellus (strain ATCC 27405 / DSM 1237 / JCM 9322 / NBRC 103400 / NCIMB 10682 / NRRL B-4536 / VPI 7372) (Clostridium thermocellum).